A 173-amino-acid polypeptide reads, in one-letter code: Crossover junction endodeoxyribonuclease RuvC (173 aa).

Residues Asp8, Glu67, and Asp139 contribute to the active site. 3 residues coordinate Mg(2+): Asp8, Glu67, and Asp139.

This sequence belongs to the RuvC family. Homodimer which binds Holliday junction (HJ) DNA. The HJ becomes 2-fold symmetrical on binding to RuvC with unstacked arms; it has a different conformation from HJ DNA in complex with RuvA. In the full resolvosome a probable DNA-RuvA(4)-RuvB(12)-RuvC(2) complex forms which resolves the HJ. The cofactor is Mg(2+).

Its subcellular location is the cytoplasm. It carries out the reaction Endonucleolytic cleavage at a junction such as a reciprocal single-stranded crossover between two homologous DNA duplexes (Holliday junction).. Its function is as follows. The RuvA-RuvB-RuvC complex processes Holliday junction (HJ) DNA during genetic recombination and DNA repair. Endonuclease that resolves HJ intermediates. Cleaves cruciform DNA by making single-stranded nicks across the HJ at symmetrical positions within the homologous arms, yielding a 5'-phosphate and a 3'-hydroxyl group; requires a central core of homology in the junction. The consensus cleavage sequence is 5'-(A/T)TT(C/G)-3'. Cleavage occurs on the 3'-side of the TT dinucleotide at the point of strand exchange. HJ branch migration catalyzed by RuvA-RuvB allows RuvC to scan DNA until it finds its consensus sequence, where it cleaves and resolves the cruciform DNA. The sequence is that of Crossover junction endodeoxyribonuclease RuvC from Pectobacterium carotovorum subsp. carotovorum (strain PC1).